The primary structure comprises 61 residues: MIMAELKIIQVRGTIGARWNQRESLRTLGLRKIRQSVVREDNAQTRGLIKTVHHLVVVEEV.

This sequence belongs to the universal ribosomal protein uL30 family. Part of the 50S ribosomal subunit.

This is Large ribosomal subunit protein uL30 from Mycobacterium sp. (strain KMS).